We begin with the raw amino-acid sequence, 79 residues long: Acyl carrier protein (79 aa).

The region spanning 2–77 is the Carrier domain; it reads ADFEARVKEI…SAIDYVKTHV (76 aa). At Ser37 the chain carries O-(pantetheine 4'-phosphoryl)serine.

Belongs to the acyl carrier protein (ACP) family. Post-translationally, 4'-phosphopantetheine is transferred from CoA to a specific serine of apo-ACP by AcpS. This modification is essential for activity because fatty acids are bound in thioester linkage to the sulfhydryl of the prosthetic group.

It localises to the cytoplasm. The protein operates within lipid metabolism; fatty acid biosynthesis. Carrier of the growing fatty acid chain in fatty acid biosynthesis. This Endomicrobium trichonymphae protein is Acyl carrier protein.